A 93-amino-acid chain; its full sequence is Integration host factor subunit beta (93 aa).

It belongs to the bacterial histone-like protein family. Heterodimer of an alpha and a beta chain.

Functionally, this protein is one of the two subunits of integration host factor, a specific DNA-binding protein that functions in genetic recombination as well as in transcriptional and translational control. The protein is Integration host factor subunit beta of Tolumonas auensis (strain DSM 9187 / NBRC 110442 / TA 4).